Here is a 146-residue protein sequence, read N- to C-terminus: Transcription antitermination protein NusB (146 aa).

This sequence belongs to the NusB family.

Involved in transcription antitermination. Required for transcription of ribosomal RNA (rRNA) genes. Binds specifically to the boxA antiterminator sequence of the ribosomal RNA (rrn) operons. The protein is Transcription antitermination protein NusB of Herpetosiphon aurantiacus (strain ATCC 23779 / DSM 785 / 114-95).